The primary structure comprises 426 residues: Pannexin-1 (426 aa).

At 1 to 40 the chain is on the cytoplasmic side; that stretch reads MAIAQLATEYVFSDFLLKEPTEPKFKGLRLELAVDKMVTC. Cys40 bears the S-nitrosocysteine mark. A helical membrane pass occupies residues 41–61; sequence IAVGLPLLLISLAFAQEISIG. Topologically, residues 62-106 are extracellular; that stretch reads TQISCFSPSSFSWRQAAFVDSYCWAAVQQKNSLQSESGNLPLWLH. 2 cysteine pairs are disulfide-bonded: Cys66-Cys265 and Cys84-Cys246. A helical membrane pass occupies residues 107-127; it reads KFFPYILLLFAILLYLPPLFW. Topologically, residues 128–217 are cytoplasmic; the sequence is RFAAAPHICS…NLIIKYISCR (90 aa). Tyr199 carries the post-translational modification Phosphotyrosine. Residues 218–238 form a helical membrane-spanning segment; sequence LLTLIIILLACIYLGYYFSLS. Residues 239–266 lie on the Extracellular side of the membrane; the sequence is SLSDEFVCSIKSGILRNDSTVPDQFQCK. Asn255 carries N-linked (GlcNAc...) asparagine glycosylation. Residues 267-287 form a helical membrane-spanning segment; that stretch reads LIAVGIFQLLSVINLVVYVLL. The Cytoplasmic segment spans residues 288–426; the sequence is APVVVYTLFV…ARQRLLDSSC (139 aa). Cys347 bears the S-nitrosocysteine mark. Residues 405 to 414 are compositionally biased toward polar residues; sequence DSETKANNGE. The interval 405–426 is disordered; the sequence is DSETKANNGEKNARQRLLDSSC. A compositionally biased stretch (basic and acidic residues) spans 415–426; it reads KNARQRLLDSSC.

The protein belongs to the pannexin family. As to quaternary structure, homoheptameric. In terms of processing, S-nitrosylation inhibits channel currents and ATP release. Post-translationally, N-glycosylation plays a role in cell surface targeting. Glycosylation at its extracellular surface makes unlikely that two oligomers could dock to form an intercellular channel such as in gap junctions. Exists in three glycosylation states: non-glycosylated (GLY0), high-mannose glycosylated (GLY1), and fully mature glycosylated (GLY2). Cleaved by CASP3 and CASP7 during apoptosis. Cleavage opens the channel for the release of metabolites and induces plasma membrane permeability during apoptosis. In terms of processing, phosphorylated at Tyr-199 by SRC. Phosphorylation activates ATP release. Constitutively phosphorylated in vascular smooth muscle cells. In terms of tissue distribution, widely expressed. Highest expression is observed in oocytes and brain. Detected at very low levels in sperm cells.

It localises to the cell membrane. It is found in the endoplasmic reticulum membrane. It catalyses the reaction chloride(in) = chloride(out). The catalysed reaction is iodide(out) = iodide(in). It carries out the reaction ATP(in) = ATP(out). The enzyme catalyses K(+)(in) = K(+)(out). It catalyses the reaction Ca(2+)(in) = Ca(2+)(out). The catalysed reaction is Na(+)(in) = Na(+)(out). It carries out the reaction nitrate(in) = nitrate(out). The enzyme catalyses L-aspartate(out) = L-aspartate(in). It catalyses the reaction L-glutamate(out) = L-glutamate(in). The catalysed reaction is D-gluconate(in) = D-gluconate(out). It carries out the reaction spermidine(in) = spermidine(out). Its function is as follows. Ion channel involved in a variety of physiological functions such as blood pressure regulation, apoptotic cell clearance and oogenesis. Forms anion-selective channels with relatively low conductance and an order of permeabilities: nitrate&gt;iodide&gt;chlroride&gt;&gt;aspartate=glutamate=gluconate. Can release ATP upon activation through phosphorylation or cleavage at C-terminus. May play a role as a Ca(2+)-leak channel to regulate ER Ca(2+) homeostasis. Functionally, during apoptosis, the C terminal tail is cleaved by caspases, which opens the main pore acting as a large-pore ATP efflux channel with a broad distribution, which allows the regulated release of molecules and ions smaller than 1 kDa, such as nucleotides ATP and UTP, and selective plasma membrane permeability to attract phagocytes that engulf the dying cells. This is Pannexin-1 from Homo sapiens (Human).